The sequence spans 222 residues: Pre-mRNA cleavage factor Im 25 kDa subunit 1 (222 aa).

The Nudix hydrolase domain maps to 67-194 (GLRTCVEAVL…KLLAVPLCQL (128 aa)). The segment at 94–96 (SIF) is interaction with RNA. A Nudix box motif is present at residues 101-122 (GRLRPGESDIEGLKRKLASKLS).

The protein belongs to the Nudix hydrolase family. CPSF5 subfamily. In terms of assembly, homodimer. Component of the cleavage factor Im (CFIm) complex. Forms a complex with cleavage and polyadenylation specificity factor (CPSF) subunits FIPS5.

Its subcellular location is the nucleus. In terms of biological role, component of the cleavage factor Im (CFIm) complex that plays a key role in pre-mRNA 3'-processing. Involved in association with CPSF6 or CPSF7 in pre-MRNA 3'-end poly(A) site cleavage and poly(A) addition. NUDT21/CPSF5 binds to cleavage and polyadenylation RNA substrates. The homodimer mediates simultaneous sequence-specific recognition of two 5'-UGUA-3' elements within the pre-mRNA. Binds to, but does not hydrolyze mono- and di-adenosine nucleotides. May have a role in mRNA export. The protein is Pre-mRNA cleavage factor Im 25 kDa subunit 1 of Arabidopsis thaliana (Mouse-ear cress).